Consider the following 450-residue polypeptide: Chromosomal replication initiator protein DnaA (450 aa).

Residues 1 to 79 form a domain I, interacts with DnaA modulators region; that stretch reads MKDSYFDLNT…MEYAYDVAHD (79 aa). Residues 79 to 112 are domain II; it reads DFFKPELKVIKVVANPVNNQKSNQSNSDFVATDY. The tract at residues 113-329 is domain III, AAA+ region; that stretch reads QLNQNFTFDT…GAFNTLTLMA (217 aa). Residues G157, G159, K160, and T161 each contribute to the ATP site. The segment at 330–450 is domain IV, binds dsDNA; it reads RAGRPINVSN…NLSTKIKEKS (121 aa).

Belongs to the DnaA family. Oligomerizes as a right-handed, spiral filament on DNA at oriC.

Its subcellular location is the cytoplasm. Its function is as follows. Plays an essential role in the initiation and regulation of chromosomal replication. ATP-DnaA binds to the origin of replication (oriC) to initiate formation of the DNA replication initiation complex once per cell cycle. Binds the DnaA box (a 9 base pair repeat at the origin) and separates the double-stranded (ds)DNA. Forms a right-handed helical filament on oriC DNA; dsDNA binds to the exterior of the filament while single-stranded (ss)DNA is stabiized in the filament's interior. The ATP-DnaA-oriC complex binds and stabilizes one strand of the AT-rich DNA unwinding element (DUE), permitting loading of DNA polymerase. After initiation quickly degrades to an ADP-DnaA complex that is not apt for DNA replication. Binds acidic phospholipids. This is Chromosomal replication initiator protein DnaA from Oenococcus oeni (strain ATCC BAA-331 / PSU-1).